The primary structure comprises 279 residues: MSDQPVSQTAPPLYIVSGGAGAVGEQVARLTLSQFEGAEVPLIIIPNVRDLSQIAEVVERAAHQNGTILHTLMEPSLRRELMRLARERGVAEIDLVGSVLSRLATVLRKEPLGKPGLYQPRRSAYFERLDAIEYTVAHDDGNKPHELHQADIVLVGISRVGKTPLSMYLAVLGWKVANVPLVREVPLPAELFQVDPRRVIGLIVEAEQITARRRWRQRRMGVSIGGNYTSLDAAYDEVEWARRTFRQHGWTTINVTDKSIEESADEIITLISRRFSQLP.

An ADP-binding site is contributed by 156–163 (GISRVGKT).

This sequence belongs to the pyruvate, phosphate/water dikinase regulatory protein family. PDRP subfamily.

It carries out the reaction N(tele)-phospho-L-histidyl/L-threonyl-[pyruvate, phosphate dikinase] + ADP = N(tele)-phospho-L-histidyl/O-phospho-L-threonyl-[pyruvate, phosphate dikinase] + AMP + H(+). The catalysed reaction is N(tele)-phospho-L-histidyl/O-phospho-L-threonyl-[pyruvate, phosphate dikinase] + phosphate + H(+) = N(tele)-phospho-L-histidyl/L-threonyl-[pyruvate, phosphate dikinase] + diphosphate. Functionally, bifunctional serine/threonine kinase and phosphorylase involved in the regulation of the pyruvate, phosphate dikinase (PPDK) by catalyzing its phosphorylation/dephosphorylation. The chain is Putative pyruvate, phosphate dikinase regulatory protein from Chloroflexus aurantiacus (strain ATCC 29366 / DSM 635 / J-10-fl).